The chain runs to 447 residues: Phosphoglucosamine mutase (447 aa).

Ser101 acts as the Phosphoserine intermediate in catalysis. Residues Ser101, Asp242, Asp244, and Asp246 each contribute to the Mg(2+) site. Phosphoserine is present on Ser101.

Belongs to the phosphohexose mutase family. Requires Mg(2+) as cofactor. Post-translationally, activated by phosphorylation.

It catalyses the reaction alpha-D-glucosamine 1-phosphate = D-glucosamine 6-phosphate. Functionally, catalyzes the conversion of glucosamine-6-phosphate to glucosamine-1-phosphate. This is Phosphoglucosamine mutase from Bradyrhizobium diazoefficiens (strain JCM 10833 / BCRC 13528 / IAM 13628 / NBRC 14792 / USDA 110).